Here is a 37-residue protein sequence, read N- to C-terminus: Large ribosomal subunit protein bL36c (37 aa).

As to quaternary structure, component of the chloroplast large ribosomal subunit (LSU). Mature 70S chloroplast ribosomes of higher plants consist of a small (30S) and a large (50S) subunit. The 30S small subunit contains 1 molecule of ribosomal RNA (16S rRNA) and 24 different proteins. The 50S large subunit contains 3 rRNA molecules (23S, 5S and 4.5S rRNA) and 33 different proteins.

The protein localises to the plastid. Its subcellular location is the chloroplast. In terms of biological role, component of the chloroplast ribosome (chloro-ribosome), a dedicated translation machinery responsible for the synthesis of chloroplast genome-encoded proteins, including proteins of the transcription and translation machinery and components of the photosynthetic apparatus. This is Large ribosomal subunit protein bL36c (rpl36) from Spinacia oleracea (Spinach).